A 320-amino-acid polypeptide reads, in one-letter code: Pyrroline-5-carboxylate reductase 2 (320 aa).

Ser2 is modified (N-acetylserine). NADP(+)-binding positions include 6–11 and Ser34; that span reads IGAGQL. NADPH is bound by residues Ala8, Gln10, Leu11, Ser34, Glu36, Asn56, Val70, Lys71, and Ala97. Residues Asn56, 69–72, and 95–97 each bind NADP(+); these read AVKP and CAA. An L-proline-binding site is contributed by Glu164. Asn230 contributes to the NADPH binding site. Residues Ala237 and Thr238 each coordinate L-proline. Positions 295–305 are enriched in low complexity; that stretch reads PTVSTLTPSSP. The interval 295-320 is disordered; that stretch reads PTVSTLTPSSPGKLLTRSLALGGKKD. The residue at position 304 (Ser304) is a Phosphoserine.

It belongs to the pyrroline-5-carboxylate reductase family. In terms of assembly, homodecamer; composed of 5 homodimers. Interacts with LTO1. Detected in erythrocytes (at protein level). Expressed in fetal brain.

The protein resides in the cytoplasm. It is found in the mitochondrion. The enzyme catalyses L-proline + NADP(+) = (S)-1-pyrroline-5-carboxylate + NADPH + 2 H(+). It carries out the reaction L-proline + NAD(+) = (S)-1-pyrroline-5-carboxylate + NADH + 2 H(+). It functions in the pathway amino-acid biosynthesis; L-proline biosynthesis; L-proline from L-glutamate 5-semialdehyde: step 1/1. Its activity is regulated as follows. Subject to competitive inhibition by NADP. Was reported not to be inhibited by proline. However other study demonstrated an inhibition by proline. Functionally, oxidoreductase that catalyzes the last step in proline biosynthesis, which corresponds to the reduction of pyrroline-5-carboxylate to L-proline using NAD(P)H. At physiologic concentrations, has higher specific activity in the presence of NADH. Involved in cellular response to oxidative stress. In some cell types, such as erythrocytes, its primary function may be the generation of NADP(+). The sequence is that of Pyrroline-5-carboxylate reductase 2 from Homo sapiens (Human).